We begin with the raw amino-acid sequence, 157 residues long: SsrA-binding protein (157 aa).

The protein belongs to the SmpB family.

It localises to the cytoplasm. Its function is as follows. Required for rescue of stalled ribosomes mediated by trans-translation. Binds to transfer-messenger RNA (tmRNA), required for stable association of tmRNA with ribosomes. tmRNA and SmpB together mimic tRNA shape, replacing the anticodon stem-loop with SmpB. tmRNA is encoded by the ssrA gene; the 2 termini fold to resemble tRNA(Ala) and it encodes a 'tag peptide', a short internal open reading frame. During trans-translation Ala-aminoacylated tmRNA acts like a tRNA, entering the A-site of stalled ribosomes, displacing the stalled mRNA. The ribosome then switches to translate the ORF on the tmRNA; the nascent peptide is terminated with the 'tag peptide' encoded by the tmRNA and targeted for degradation. The ribosome is freed to recommence translation, which seems to be the essential function of trans-translation. The chain is SsrA-binding protein from Rhodococcus jostii (strain RHA1).